The primary structure comprises 457 residues: MITREFDTIAAISTPLGEGAIGIVRLSGTDSFAIAQKIFKGKDLNKVASHTLNYGHIIDPLTGKVMDEVMVGAMKSPKTFTREDIIEINTHGGIAVTNEILQLAIREGARLAEPGEFTKRAFLNGRVDLTQAEAVMDIIRAKTDKAMNIAVKQLDGSLSDLINNTRQEILNTLAQVEVNIDYPEYDDVEEATTAVVREKTMEFEQLLTKLLRTARRGKILREGISTAIIGRPNVGKSSLLNNLLREDKAIVTDIAGTTRDVIEEYVNINGVPLKLIDTAGIRETDDIVEQIGVERSKKALKEADLVLLVLNASEPLTAQDRQLLEISQETNRIILLNKTDLPETIETSELPEDVIRISVLKNQNIDKIEERINNLFFENAGLVEQDATYLSNARHISLIEKAVESLQAVNQGLELGMPVDLLQVDLTRTWEILGEITGDAAPDELITQLFSQFCLGK.

Residues R25, E87, and R126 each contribute to the (6S)-5-formyl-5,6,7,8-tetrahydrofolate site. The region spanning 223–377 is the TrmE-type G domain; that stretch reads GISTAIIGRP…IEERINNLFF (155 aa). N233 is a K(+) binding site. GTP-binding positions include 233-238, 252-258, and 277-280; these read NVGKSS, TDIAGTT, and DTAG. S237 provides a ligand contact to Mg(2+). 3 residues coordinate K(+): T252, I254, and T257. Residue T258 participates in Mg(2+) binding. (6S)-5-formyl-5,6,7,8-tetrahydrofolate is bound at residue K457.

Belongs to the TRAFAC class TrmE-Era-EngA-EngB-Septin-like GTPase superfamily. TrmE GTPase family. In terms of assembly, homodimer. Heterotetramer of two MnmE and two MnmG subunits. K(+) serves as cofactor.

The protein resides in the cytoplasm. Its function is as follows. Exhibits a very high intrinsic GTPase hydrolysis rate. Involved in the addition of a carboxymethylaminomethyl (cmnm) group at the wobble position (U34) of certain tRNAs, forming tRNA-cmnm(5)s(2)U34. The chain is tRNA modification GTPase MnmE from Streptococcus pneumoniae serotype 4 (strain ATCC BAA-334 / TIGR4).